A 269-amino-acid polypeptide reads, in one-letter code: Diaminopimelate epimerase (269 aa).

Positions 13, 46, and 65 each coordinate substrate. C74 functions as the Proton donor in the catalytic mechanism. Substrate-binding positions include 75–76 (GN), N149, N182, and 200–201 (ER). C209 acts as the Proton acceptor in catalysis. Position 210–211 (210–211 (GT)) interacts with substrate.

This sequence belongs to the diaminopimelate epimerase family. As to quaternary structure, homodimer.

The protein resides in the cytoplasm. The catalysed reaction is (2S,6S)-2,6-diaminopimelate = meso-2,6-diaminopimelate. It functions in the pathway amino-acid biosynthesis; L-lysine biosynthesis via DAP pathway; DL-2,6-diaminopimelate from LL-2,6-diaminopimelate: step 1/1. Its function is as follows. Catalyzes the stereoinversion of LL-2,6-diaminopimelate (L,L-DAP) to meso-diaminopimelate (meso-DAP), a precursor of L-lysine and an essential component of the bacterial peptidoglycan. The protein is Diaminopimelate epimerase of Zymomonas mobilis subsp. mobilis (strain ATCC 31821 / ZM4 / CP4).